Reading from the N-terminus, the 689-residue chain is Glycine--tRNA ligase beta subunit (689 aa).

It belongs to the class-II aminoacyl-tRNA synthetase family. Tetramer of two alpha and two beta subunits.

It is found in the cytoplasm. The enzyme catalyses tRNA(Gly) + glycine + ATP = glycyl-tRNA(Gly) + AMP + diphosphate. The chain is Glycine--tRNA ligase beta subunit from Shewanella sediminis (strain HAW-EB3).